The primary structure comprises 113 residues: Large ribosomal subunit protein uL22 (113 aa).

Belongs to the universal ribosomal protein uL22 family. As to quaternary structure, part of the 50S ribosomal subunit.

In terms of biological role, this protein binds specifically to 23S rRNA; its binding is stimulated by other ribosomal proteins, e.g. L4, L17, and L20. It is important during the early stages of 50S assembly. It makes multiple contacts with different domains of the 23S rRNA in the assembled 50S subunit and ribosome. Its function is as follows. The globular domain of the protein is located near the polypeptide exit tunnel on the outside of the subunit, while an extended beta-hairpin is found that lines the wall of the exit tunnel in the center of the 70S ribosome. The sequence is that of Large ribosomal subunit protein uL22 from Xanthomonas oryzae pv. oryzae (strain MAFF 311018).